Here is a 92-residue protein sequence, read N- to C-terminus: Bombyxin A-6 (92 aa).

The N-terminal stretch at M1–T19 is a signal peptide. At Q20 the chain carries Pyrrolidone carboxylic acid. 3 cysteine pairs are disulfide-bonded: C29/C79, C41/C92, and C78/C83. Positions S50–G70 are cleaved as a propeptide — c peptide like.

The protein belongs to the insulin family. In terms of assembly, heterodimer of a B chain and an A chain linked by two disulfide bonds.

It localises to the secreted. In terms of biological role, brain peptide responsible for activation of prothoracic glands to produce ecdysone in insects. The protein is Bombyxin A-6 (BBXA6) of Bombyx mori (Silk moth).